Reading from the N-terminus, the 317-residue chain is Melanocyte-stimulating hormone receptor (317 aa).

Topologically, residues 1 to 37 (MPVQGSQRRLLGSLNSTPTAPPHLGLAANQTGARCLE) are extracellular. A glycan (N-linked (GlcNAc...) asparagine) is linked at Asn-29. Residues 38-63 (VSIPDGLFLSLGLVSLVENVLVVTAI) traverse the membrane as a helical segment. Residues 64–72 (AKNRNLHSP) are Cytoplasmic-facing. The chain crosses the membrane as a helical span at residues 73 to 93 (MYCFICCLALSDLLVSGSNML). The Extracellular segment spans residues 94–118 (ETAVILLLEAGALAARAAVVQQLDN). A helical membrane pass occupies residues 119–140 (VIDVITCSSMLSSLCFLGAIAV). The Cytoplasmic segment spans residues 141–163 (DRYISIFYALRYHSIVTLPRARR). The chain crosses the membrane as a helical span at residues 164-183 (AVAAIWVASVLFSMLFIAYY). Topologically, residues 184–191 (DHAAVLLC) are extracellular. Residues 192–211 (LVVFFLAMLVLMAVLYIHML) traverse the membrane as a helical segment. Residues 212-240 (VRACQHAQGIARLHKRQRPAHQGFGLKGA) lie on the Cytoplasmic side of the membrane. Residues 241–266 (ATLTILLGIFFLCWGPFFLHLTLIVL) form a helical membrane-spanning segment. Residues 267–279 (CPQHPTCSCIFKN) are Extracellular-facing. The chain crosses the membrane as a helical span at residues 280 to 300 (FNLFLALIICNAIIDPLIYAF). At 301 to 317 (RSQELRRTLKEVLLCSW) the chain is on the cytoplasmic side. Cys-315 carries S-palmitoyl cysteine lipidation.

Belongs to the G-protein coupled receptor 1 family. In terms of assembly, interacts with MGRN1, but does not undergo MGRN1-mediated ubiquitination; this interaction competes with GNAS-binding and thus inhibits agonist-induced cAMP production. Interacts with OPN3; the interaction results in a decrease in MC1R-mediated cAMP signaling and ultimately a decrease in melanin production in melanocytes.

It is found in the cell membrane. Its function is as follows. Receptor for MSH (alpha, beta and gamma) and ACTH. The activity of this receptor is mediated by G proteins which activate adenylate cyclase. Mediates melanogenesis, the production of eumelanin (black/brown) and phaeomelanin (red/yellow), via regulation of cAMP signaling in melanocytes. This Cercopithecus diana (Diana monkey) protein is Melanocyte-stimulating hormone receptor (MC1R).